Here is a 670-residue protein sequence, read N- to C-terminus: Receptor for retinol uptake stra6 (670 aa).

Topologically, residues 1-38 are extracellular; that stretch reads MSAETVNNYDYSDWYENAAPTKAPVEVIPPCDPTADEG. The chain crosses the membrane as a helical span at residues 39 to 59; the sequence is LFHICIAAISLVVMLVLAILA. The Cytoplasmic portion of the chain corresponds to 60–87; that stretch reads RRQKLSDNQRGLTGLLSPVNFLDHTQHK. A helical membrane pass occupies residues 88-108; the sequence is GLAVAVYGVLFCKLVGMVLSH. The Extracellular portion of the chain corresponds to 109–121; that stretch reads HPLPFTKEVANKE. A helical membrane pass occupies residues 122–142; it reads FWMILALLYYPALYYPLLACG. Topologically, residues 143 to 145 are cytoplasmic; it reads TLH. A helical transmembrane segment spans residues 146 to 166; the sequence is NKVGYVLGSLLSWTHFGILVW. Over 167-182 the chain is Extracellular; the sequence is QKVDCPKTPQIYKYYA. Residues 183–203 form a helical membrane-spanning segment; the sequence is LFGSLPQIACLAFLSFQYPLL. At 204–274 the chain is on the cytoplasmic side; it reads LFKGLQNTET…PEDVFRFPLK (71 aa). A helical membrane pass occupies residues 275–295; that stretch reads LAISVVVAFIALYQMALLLIS. Residues 296 to 346 are Extracellular-facing; it reads GVLPTLHIVRRGVDENIAFLLAGFNIILSNDRQEVVRIVVYYLWCVEICYV. A helical transmembrane segment spans residues 347–367; that stretch reads SAVTLSCLVNLLMLMRSMVLH. Residues 368–401 are Cytoplasmic-facing; it reads RSNLKGLYRGDSLNVFNCHRSIRPSRPALVCWMG. A helical transmembrane segment spans residues 402 to 422; sequence FTSYQAAFLCLGMAIQTLVFF. Topologically, residues 423–452 are extracellular; sequence ICILFAVFLIIIPILWGTNLMLFHIIGNLW. Residues 453–473 traverse the membrane as a helical segment; that stretch reads PFWLTLVLAALIQHVASRFLF. Over 474 to 488 the chain is Cytoplasmic; sequence IRKDGGTRDLNNRGS. The helical intramembrane region spans 489–526; the sequence is LFLLSYILFLVNVMIGVVLGIWRVVITALFNIVHLGRL. The Cytoplasmic segment spans residues 527–670; it reads DISLLNRNVE…KEAESAAASN (144 aa). Residues 600-626 are interaction with calmodulin; it reads VSNAKRARAHWQLLYTLVNNPSLVGSR. Residues 640 to 670 form a disordered region; sequence GALSRTSKEGSKKDGSVNEPSKEAESAAASN. A compositionally biased stretch (basic and acidic residues) spans 645-664; the sequence is TSKEGSKKDGSVNEPSKEAE.

As to quaternary structure, homodimer. Interacts (via C-terminus) with calmodulin.

The protein localises to the cell membrane. Its function is as follows. Retinol transporter. Accepts retinol from the extracellular retinol-binding protein rbp4, mediates retinol transport across the cell membrane, and then transmits retinol to the cytoplasmic retinol-binding protein rbp1. Required for normal vitamin A homeostasis. This Danio rerio (Zebrafish) protein is Receptor for retinol uptake stra6.